The chain runs to 139 residues: UDP-glucose 4-epimerase (139 aa).

NAD(+) is bound by residues 11-12 (YI), 31-36 (DNLCNS), 58-59 (DI), 80-84 (FAGLK), N99, and S124. Residue S124 coordinates substrate. Y136 (proton acceptor) is an active-site residue.

This sequence belongs to the NAD(P)-dependent epimerase/dehydratase family. In terms of assembly, homodimer. The cofactor is NAD(+).

The enzyme catalyses UDP-alpha-D-glucose = UDP-alpha-D-galactose. Its pathway is carbohydrate metabolism; galactose metabolism. Its function is as follows. Involved in the metabolism of galactose. Catalyzes the conversion of UDP-galactose (UDP-Gal) to UDP-glucose (UDP-Glc) through a mechanism involving the transient reduction of NAD. This is UDP-glucose 4-epimerase (galE) from Klebsiella pneumoniae.